Consider the following 93-residue polypeptide: MFCSIYKSTKKQGAYLYIEKKDDFAPVPQELMSMFGTPTMVMVVNLEGRKLASVDVEKVKTAIKENGFFLQLPPPPENLLEKYKKDKAAREEN.

A YcgL domain is found at 1–84 (MFCSIYKSTK…PPENLLEKYK (84 aa)).

The sequence is that of YcgL domain-containing protein VFMJ11_1829 from Aliivibrio fischeri (strain MJ11) (Vibrio fischeri).